The primary structure comprises 177 residues: ATP synthase subunit delta (177 aa).

The protein belongs to the ATPase delta chain family. In terms of assembly, F-type ATPases have 2 components, F(1) - the catalytic core - and F(0) - the membrane proton channel. F(1) has five subunits: alpha(3), beta(3), gamma(1), delta(1), epsilon(1). F(0) has three main subunits: a(1), b(2) and c(10-14). The alpha and beta chains form an alternating ring which encloses part of the gamma chain. F(1) is attached to F(0) by a central stalk formed by the gamma and epsilon chains, while a peripheral stalk is formed by the delta and b chains.

It is found in the cell inner membrane. Its function is as follows. F(1)F(0) ATP synthase produces ATP from ADP in the presence of a proton or sodium gradient. F-type ATPases consist of two structural domains, F(1) containing the extramembraneous catalytic core and F(0) containing the membrane proton channel, linked together by a central stalk and a peripheral stalk. During catalysis, ATP synthesis in the catalytic domain of F(1) is coupled via a rotary mechanism of the central stalk subunits to proton translocation. In terms of biological role, this protein is part of the stalk that links CF(0) to CF(1). It either transmits conformational changes from CF(0) to CF(1) or is implicated in proton conduction. This Shewanella sediminis (strain HAW-EB3) protein is ATP synthase subunit delta.